A 415-amino-acid chain; its full sequence is Histidine--tRNA ligase (415 aa).

The protein belongs to the class-II aminoacyl-tRNA synthetase family. In terms of assembly, homodimer.

The protein localises to the cytoplasm. It catalyses the reaction tRNA(His) + L-histidine + ATP = L-histidyl-tRNA(His) + AMP + diphosphate + H(+). The sequence is that of Histidine--tRNA ligase from Clostridium botulinum (strain 657 / Type Ba4).